Reading from the N-terminus, the 161-residue chain is Cyclic pyranopterin monophosphate synthase (161 aa).

Substrate-binding positions include 75–77 (MCH) and 115–116 (ME). Asp-130 is a catalytic residue.

This sequence belongs to the MoaC family. As to quaternary structure, homohexamer; trimer of dimers.

It catalyses the reaction (8S)-3',8-cyclo-7,8-dihydroguanosine 5'-triphosphate = cyclic pyranopterin phosphate + diphosphate. Its pathway is cofactor biosynthesis; molybdopterin biosynthesis. Functionally, catalyzes the conversion of (8S)-3',8-cyclo-7,8-dihydroguanosine 5'-triphosphate to cyclic pyranopterin monophosphate (cPMP). The chain is Cyclic pyranopterin monophosphate synthase from Bacillus cereus (strain 03BB102).